The primary structure comprises 453 residues: Chromosomal replication initiator protein DnaA (453 aa).

The segment at 1–74 is domain I, interacts with DnaA modulators; sequence MKEKQFWNRI…GFEIYDAEIT (74 aa). Positions 74 to 113 are domain II; sequence TPHYIFTKPQDTTSSQVEEATNLTLYNYSPKLVSIPYSDT. A domain III, AAA+ region region spans residues 114 to 331; sequence GLKEKYTFDN…GAINDITLIA (218 aa). ATP-binding residues include glycine 158, glycine 160, lysine 161, and threonine 162. Residues 332–453 are domain IV, binds dsDNA; that stretch reads RVKKIKDITI…EIESIKKKIK (122 aa).

It belongs to the DnaA family. In terms of assembly, oligomerizes as a right-handed, spiral filament on DNA at oriC.

It is found in the cytoplasm. Plays an essential role in the initiation and regulation of chromosomal replication. ATP-DnaA binds to the origin of replication (oriC) to initiate formation of the DNA replication initiation complex once per cell cycle. Binds the DnaA box (a 9 base pair repeat at the origin) and separates the double-stranded (ds)DNA. Forms a right-handed helical filament on oriC DNA; dsDNA binds to the exterior of the filament while single-stranded (ss)DNA is stabiized in the filament's interior. The ATP-DnaA-oriC complex binds and stabilizes one strand of the AT-rich DNA unwinding element (DUE), permitting loading of DNA polymerase. After initiation quickly degrades to an ADP-DnaA complex that is not apt for DNA replication. Binds acidic phospholipids. The sequence is that of Chromosomal replication initiator protein DnaA from Streptococcus pneumoniae serotype 19F (strain G54).